We begin with the raw amino-acid sequence, 477 residues long: P3 protein (477 aa).

Residues Met-1–Gly-21 are disordered. 8 helical membrane passes run Pro-225–Ala-245, Ala-253–Phe-273, Val-281–Leu-301, Val-320–Ile-340, Val-361–Val-381, Leu-383–Leu-403, Val-417–Leu-437, and Phe-450–Tyr-470.

This sequence belongs to the bile acid:sodium symporter (BASS) (TC 2.A.28) family.

Its subcellular location is the membrane. Its function is as follows. The ubiquitous expression and the conservation of the sequence in distant animal species suggest that the gene codes for a protein with housekeeping functions. The polypeptide is P3 protein (SLC10A3) (Bos taurus (Bovine)).